The following is a 206-amino-acid chain: Protein MIS12 homolog (206 aa).

Positions 102 to 206 (DKCQETNPFS…EKESRRLETQ (105 aa)) form a coiled coil.

The protein belongs to the mis12 family. In terms of assembly, component of the MIS12 complex composed of MIS12, DSN1, NSL1 and PMF1. Also interacts with KNL1, CBX3, CBX5, NDC80 and ZWINT.

The protein resides in the chromosome. It localises to the centromere. Its subcellular location is the kinetochore. Functionally, part of the MIS12 complex which is required for normal chromosome alignment and segregation and for kinetochore formation during mitosis. Essential for proper kinetochore microtubule attachments. This is Protein MIS12 homolog from Mus musculus (Mouse).